Consider the following 297-residue polypeptide: MKHFLEISQLSSEQIESLLQRALYFKHTKQYPSYSQSIIANLFYENSTRTRISFELAERHLSMSVVNLDLQTSSETKGEAIEDTIRTLAAMGIQYFVIRHKQDGLQQNLANKLGDTVHIINAGDGTHAHPSQAILDMVTIVEQKKQLDKLKIAILGNIKHSRVANSFQCICSKLGVGELVLISPEIWQPSQVHFGRVTDNLNEGLEGADVIICLRVQRERLLQDDHLDLDFYRNNFALTQKSLSYAKPDAMVMHPGPMNRGVEIDSEVADGKQSCILQQVTNGVYARMAILESLIGS.

The carbamoyl phosphate site is built by arginine 49 and threonine 50. Lysine 77 provides a ligand contact to L-aspartate. 3 residues coordinate carbamoyl phosphate: arginine 99, histidine 129, and glutamine 132. Residues arginine 162 and arginine 215 each contribute to the L-aspartate site. Positions 256 and 257 each coordinate carbamoyl phosphate.

It belongs to the aspartate/ornithine carbamoyltransferase superfamily. ATCase family. In terms of assembly, heterododecamer (2C3:3R2) of six catalytic PyrB chains organized as two trimers (C3), and six regulatory PyrI chains organized as three dimers (R2).

It carries out the reaction carbamoyl phosphate + L-aspartate = N-carbamoyl-L-aspartate + phosphate + H(+). It functions in the pathway pyrimidine metabolism; UMP biosynthesis via de novo pathway; (S)-dihydroorotate from bicarbonate: step 2/3. Catalyzes the condensation of carbamoyl phosphate and aspartate to form carbamoyl aspartate and inorganic phosphate, the committed step in the de novo pyrimidine nucleotide biosynthesis pathway. This chain is Aspartate carbamoyltransferase catalytic subunit, found in Legionella pneumophila (strain Corby).